The primary structure comprises 157 residues: 2-C-methyl-D-erythritol 2,4-cyclodiphosphate synthase (157 aa).

Asp8 and His10 together coordinate a divalent metal cation. 4-CDP-2-C-methyl-D-erythritol 2-phosphate-binding positions include 8 to 10 (DVH) and 34 to 35 (HS). His42 lines the a divalent metal cation pocket. 4-CDP-2-C-methyl-D-erythritol 2-phosphate is bound by residues 56–58 (DIG), 61–65 (FPDTD), 132–135 (TTTE), Phe139, and Arg142.

The protein belongs to the IspF family. In terms of assembly, homotrimer. Requires a divalent metal cation as cofactor.

The enzyme catalyses 4-CDP-2-C-methyl-D-erythritol 2-phosphate = 2-C-methyl-D-erythritol 2,4-cyclic diphosphate + CMP. The protein operates within isoprenoid biosynthesis; isopentenyl diphosphate biosynthesis via DXP pathway; isopentenyl diphosphate from 1-deoxy-D-xylulose 5-phosphate: step 4/6. In terms of biological role, involved in the biosynthesis of isopentenyl diphosphate (IPP) and dimethylallyl diphosphate (DMAPP), two major building blocks of isoprenoid compounds. Catalyzes the conversion of 4-diphosphocytidyl-2-C-methyl-D-erythritol 2-phosphate (CDP-ME2P) to 2-C-methyl-D-erythritol 2,4-cyclodiphosphate (ME-CPP) with a corresponding release of cytidine 5-monophosphate (CMP). This Pseudomonas putida (strain W619) protein is 2-C-methyl-D-erythritol 2,4-cyclodiphosphate synthase.